The following is a 169-amino-acid chain: Tumor suppressor ARF (169 aa).

An interaction with CDK5RAP3 and MDM2 region spans residues 1 to 63 (MGRRFLVTVR…RRGPHRNPGP (63 aa)). Positions 54–73 (RRGPHRNPGPGDDDGQRSRS) are disordered.

Does not interact with cyclins, CDK1, CDK2, CDK4, CDK5 or CDK6. Interacts with COMMD1. Binds to BCL6, E2F1, HUWE1, MDM2, MYC, NPM1/B23, TOP1/TOPOI and UBE2I/UBC9. Interacts with TBRG1. Interacts with CDKN2AIP and E4F1. Interacts with CDK5RAP3 and MDM2; form a ternary complex involved in regulation of p53/TP53. Interacts with NOP53; the interaction is direct and promotes ARF nucleoplasmic relocalization and ubiquitin-mediated proteasomal degradation. Interacts with TTF1 (via the N-terminal region (NRD) and a C-terminal region); the interaction is direct and inhibits the nucleolar localization of TTF1. As to quaternary structure, interacts with C1QBP. Post-translationally, ubiquitinated in normal cells by TRIP12 via the ubiquitin fusion degradation (UFD) pathway, a process that mediates ubiquitination at the N-terminus, regardless of the absence of lysine residues. Ubiquitination leads to its proteasomal degradation. In cancer cells, however, TRIP12 is located in a different cell compartment, preventing ubiquitination and degradation.

Its subcellular location is the nucleus. It is found in the nucleolus. The protein localises to the nucleoplasm. The protein resides in the mitochondrion. In terms of biological role, capable of inducing cell cycle arrest in G1 and G2 phases. Acts as a tumor suppressor. Binds to MDM2 and blocks its nucleocytoplasmic shuttling by sequestering it in the nucleolus. This inhibits the oncogenic action of MDM2 by blocking MDM2-induced degradation of p53 and enhancing p53-dependent transactivation and apoptosis. Also induces G2 arrest and apoptosis in a p53-independent manner by preventing the activation of cyclin B1/CDC2 complexes. Binds to BCL6 and down-regulates BCL6-induced transcriptional repression. Binds to E2F1 and MYC and blocks their transcriptional activator activity but has no effect on MYC transcriptional repression. Binds to TOP1/TOPOI and stimulates its activity. This complex binds to rRNA gene promoters and may play a role in rRNA transcription and/or maturation. Interacts with NPM1/B23 and promotes its polyubiquitination and degradation, thus inhibiting rRNA processing. Plays a role in inhibiting ribosome biogenesis, perhaps by binding to the nucleolar localization sequence of transcription termination factor TTF1, and thereby preventing nucleolar localization of TTF1. Interacts with COMMD1 and promotes its 'Lys63'-linked polyubiquitination. Interacts with UBE2I/UBC9 and enhances sumoylation of a number of its binding partners including MDM2 and E2F1. Binds to HUWE1 and represses its ubiquitin ligase activity. May play a role in controlling cell proliferation and apoptosis during mammary gland development. Its function is as follows. May be involved in regulation of autophagy and caspase-independent cell death; the short-lived mitochondrial isoform is stabilized by C1QBP. This Mus musculus (Mouse) protein is Tumor suppressor ARF.